The sequence spans 472 residues: Tubulin gamma chain (472 aa).

Residue 142-148 participates in GTP binding; sequence AGGTGSG.

It belongs to the tubulin family. Component of the gamma-tubulin small complex (gamma-TuSC) composed of tubulin gamma chain, gamma-tubulin complex protein 2 (GCP2) and gamma-tubulin complex protein 3 (GCP3). Interacts with GCP2 and GCP3. Interacts with EB1.

Its subcellular location is the cytoplasm. The protein resides in the cytoskeleton. The protein localises to the flagellum axoneme. It is found in the flagellum basal body. It localises to the spindle. Its subcellular location is the microtubule organizing center. Tubulin is the major constituent of microtubules (Potential). The gamma chain is found at microtubule organizing centers (MTOC) such as the centrosome. Component of the gamma-tubulin small complex (gamma-TuSC) involved in microtubule nucleation for the formation of median bodies and in the biogenesis of flagella. Gamma-TuSC may be required for the correct positioning of EB1 within the trophozoites. The protein is Tubulin gamma chain of Giardia intestinalis (strain ATCC 50803 / WB clone C6) (Giardia lamblia).